A 413-amino-acid chain; its full sequence is MDHHQLFSLCSFSYIFKIKKHLFVSLFLLSLLIFSTVVVDVMPSLRIGLLSSSSSQTVTKECDYSKGKWVRRASSSSSSVNGLFYGEECRFLDSGFRCHKHGRKDSGYLDWRWQPHGCDLPRFNASDLLERSRNGRIVFVGDSIGRNQWESLMCMLSQAIPNKSEIYEVNGNPITKHKGFLSMRFPRENLTVEYHRSPFLVVIGRPPDKSPKEIKTTVRVDEFNWQSKRWVGSDVLVFNSGHWWNEDKTVLTGCYFEEGRKVNKTMGVMEAFGKSLKTWKSWVLEKLDPDKSYVFFRSYSPVHYRNGTWNTGGLCDAEIEPETDKRKLEPDASHNEYIYKVIEEMRYRHSKVKFLNITYLTEFRKDGHISRYREQGTSVDVPQDCSHWCLPGVPDTWNEILYAQLLSMNYRTK.

Residues 22–42 (LFVSLFLLSLLIFSTVVVDVM) form a helical; Signal-anchor for type II membrane protein membrane-spanning segment. The short motif at 141 to 143 (GDS) is the GDS motif element. The DCXHWCLPGXXDXWN motif signature appears at 384 to 398 (DCSHWCLPGVPDTWN).

Belongs to the PC-esterase family. TBL subfamily.

Its subcellular location is the membrane. Its function is as follows. May act as a bridging protein that binds pectin and other cell wall polysaccharides. Probably involved in maintaining esterification of pectins. May be involved in the specific O-acetylation of cell wall polymers. In Arabidopsis thaliana (Mouse-ear cress), this protein is Protein trichome birefringence-like 9 (TBL9).